Reading from the N-terminus, the 150-residue chain is Ribonuclease K6 (150 aa).

Residues 1-23 form the signal peptide; the sequence is MVLCFPLLLLLLVLWGPVCLLHA. Catalysis depends on His38, which acts as the Proton acceptor. 4 cysteine pairs are disulfide-bonded: Cys46-Cys104, Cys60-Cys114, Cys78-Cys129, and Cys85-Cys92. N-linked (GlcNAc...) asparagine glycosylation occurs at Asn55. Residues 61-65 and Lys86 contribute to the substrate site; that span reads KHQNT. N-linked (GlcNAc...) asparagine glycosylation occurs at Asn100. Substrate is bound at residue Arg105. The Proton donor role is filled by His145.

This sequence belongs to the pancreatic ribonuclease family. In terms of assembly, interacts (via N-terminus) with bacterial lipopolysaccharide (LPS).

The protein resides in the secreted. The protein localises to the lysosome. It localises to the cytoplasmic granule. Ribonuclease which shows a preference for the pyrimidines uridine and cytosine. Has potent antibacterial activity against a range of Gram-positive and Gram-negative bacteria, including P.aeruginosa, A.baumanii, M.luteus, S.aureus, E.faecalis, E.faecium, S.saprophyticus and E.coli. Causes loss of bacterial membrane integrity, and also promotes agglutination of Gram-negative bacteria. Probably contributes to urinary tract sterility. Bactericidal activity is independent of RNase activity. This Miopithecus talapoin (Angolan talapoin) protein is Ribonuclease K6 (RNASE6).